The primary structure comprises 150 residues: UPF0756 membrane protein ABSDF1616 (150 aa).

4 consecutive transmembrane segments (helical) span residues 1-21 (MLAQFDVNLVVLLVLLICGLL), 45-65 (FFPYIQAHGLNLGILILTIGV), 83-103 (FISFKSLVAIAIGLLVAWLGG), and 115-135 (VVAGLLIGTVAGVALLRGVPV).

This sequence belongs to the UPF0756 family.

It is found in the cell membrane. This is UPF0756 membrane protein ABSDF1616 from Acinetobacter baumannii (strain SDF).